The primary structure comprises 610 residues: MCGIVGAVAQRDVAEILVEGLRRLEYRGYDSAGVAVVDAEHNYTRIRRLGKVKELADAVETAHVVGGTGIAHTRWATHGEPSEVNAHPHVSGDITLVHNGIIENHESLRTLLQERGYIFESQTDTEVIAHLVEWELRSSGSLLEAVQKTATQLEGAYGTVVMDRREPERLVVARSGSPIVIGCGVGENFLASDQLALLNVTRRFMYLEEGDVAEITRREIRVFDARGEQVERAITESNAEHDAGDKGQYRHFMQKEVFEQPKALINTMEGRITNDSVVTESIGVNAVEILNKVEHVQIIACGTSYNAGMTARYWFESLAGVSCDVEIASEFRYRKFVTRPNSLLITLSQSGETADTLAALRLAKERGYMGAMTVCNVAGSSLVRESDFAFMTRAGTEIGVASTKAFTTQLAALLMLVTALGKQQNRISKEKEKEIVEALHALPAQIEQALSFDKEIEALAPDFADKHHTLFLGRGEFYPIAVEASLKLKEISYIHAEAYAAGELKHGPLALIDAEMPVVVVAPTNDLLEKLKSNVEEVRARGGLLYVFADEQAGFEADESMKIITMPHVSDITAPIYYTIPMQLLSYHVALIKGTDVDQPRNLAKAVTVE.

The active-site Nucleophile; for GATase activity is the Cys2. The Glutamine amidotransferase type-2 domain maps to 2–218 (CGIVGAVAQR…EGDVAEITRR (217 aa)). SIS domains are found at residues 286 to 426 (AVEI…QQNR) and 459 to 600 (LAPD…VDQP). Lys605 acts as the For Fru-6P isomerization activity in catalysis.

As to quaternary structure, homodimer.

It localises to the cytoplasm. It carries out the reaction D-fructose 6-phosphate + L-glutamine = D-glucosamine 6-phosphate + L-glutamate. Its function is as follows. Catalyzes the first step in hexosamine metabolism, converting fructose-6P into glucosamine-6P using glutamine as a nitrogen source. The sequence is that of Glutamine--fructose-6-phosphate aminotransferase [isomerizing] from Aliivibrio fischeri (strain ATCC 700601 / ES114) (Vibrio fischeri).